Reading from the N-terminus, the 324-residue chain is Acetyl-coenzyme A carboxylase carboxyl transferase subunit alpha (324 aa).

The 255-residue stretch at 37–291 (ILEDKLENLE…DLMLRKTFEQ (255 aa)) folds into the CoA carboxyltransferase C-terminal domain.

It belongs to the AccA family. Acetyl-CoA carboxylase is a heterohexamer composed of biotin carboxyl carrier protein (AccB), biotin carboxylase (AccC) and two subunits each of ACCase subunit alpha (AccA) and ACCase subunit beta (AccD).

The protein resides in the cytoplasm. The catalysed reaction is N(6)-carboxybiotinyl-L-lysyl-[protein] + acetyl-CoA = N(6)-biotinyl-L-lysyl-[protein] + malonyl-CoA. Its pathway is lipid metabolism; malonyl-CoA biosynthesis; malonyl-CoA from acetyl-CoA: step 1/1. Component of the acetyl coenzyme A carboxylase (ACC) complex. First, biotin carboxylase catalyzes the carboxylation of biotin on its carrier protein (BCCP) and then the CO(2) group is transferred by the carboxyltransferase to acetyl-CoA to form malonyl-CoA. The sequence is that of Acetyl-coenzyme A carboxylase carboxyl transferase subunit alpha from Bacillus cereus (strain Q1).